Consider the following 733-residue polypeptide: Folic acid synthesis protein fol1 (733 aa).

DHNA stretches follow at residues 55–167 and 179–277; these read VVVE…YAER and IEFS…QIYR. Phosphotyrosine is present on tyrosine 281. The tract at residues 295 to 454 is HPK; that stretch reads NKIAYLSFGS…LPSQGIRLYS (160 aa). The region spanning 465 to 724 is the Pterin-binding domain; the sequence is ALTMGILNVT…DTKEMSKVVG (260 aa). The segment at 467–733 is DHPS; sequence TMGILNVTPD…GMANAIRYVP (267 aa). Residue asparagine 472 participates in Mg(2+) binding. (7,8-dihydropterin-6-yl)methyl diphosphate is bound by residues threonine 511, aspartate 546, asparagine 565, aspartate 637, lysine 677, and 712–714; that span reads RVH.

In the N-terminal section; belongs to the DHNA family. The protein in the central section; belongs to the HPPK family. It in the C-terminal section; belongs to the DHPS family. Requires Mg(2+) as cofactor.

The protein resides in the cytoplasm. The catalysed reaction is 7,8-dihydroneopterin = 6-hydroxymethyl-7,8-dihydropterin + glycolaldehyde. It carries out the reaction 6-hydroxymethyl-7,8-dihydropterin + ATP = (7,8-dihydropterin-6-yl)methyl diphosphate + AMP + H(+). It catalyses the reaction (7,8-dihydropterin-6-yl)methyl diphosphate + 4-aminobenzoate = 7,8-dihydropteroate + diphosphate. The protein operates within cofactor biosynthesis; tetrahydrofolate biosynthesis; 2-amino-4-hydroxy-6-hydroxymethyl-7,8-dihydropteridine diphosphate from 7,8-dihydroneopterin triphosphate: step 3/4. It participates in cofactor biosynthesis; tetrahydrofolate biosynthesis; 2-amino-4-hydroxy-6-hydroxymethyl-7,8-dihydropteridine diphosphate from 7,8-dihydroneopterin triphosphate: step 4/4. It functions in the pathway cofactor biosynthesis; tetrahydrofolate biosynthesis; 7,8-dihydrofolate from 2-amino-4-hydroxy-6-hydroxymethyl-7,8-dihydropteridine diphosphate and 4-aminobenzoate: step 1/2. In terms of biological role, catalyzes three sequential steps of tetrahydrofolate biosynthesis. This is Folic acid synthesis protein fol1 (fol1) from Schizosaccharomyces pombe (strain 972 / ATCC 24843) (Fission yeast).